The sequence spans 86 residues: Small ribosomal subunit protein bS16 (86 aa).

The protein belongs to the bacterial ribosomal protein bS16 family.

This chain is Small ribosomal subunit protein bS16, found in Carboxydothermus hydrogenoformans (strain ATCC BAA-161 / DSM 6008 / Z-2901).